The primary structure comprises 241 residues: Probable transcriptional regulatory protein azo0574 (241 aa).

A disordered region spans residues 1–21; that stretch reads MAGHSKWANIQHRKGRQDAKR.

The protein belongs to the TACO1 family.

It localises to the cytoplasm. In Azoarcus sp. (strain BH72), this protein is Probable transcriptional regulatory protein azo0574.